Here is a 75-residue protein sequence, read N- to C-terminus: uncharacterized protein (75 aa).

An N-terminal signal peptide occupies residues 1-25 (MSLFYRAVALGTLSALVWYSTSILA). The chain crosses the membrane as a helical span at residues 55-75 (YRALLAFSLVICGTLLVTCVI).

The protein resides in the host endoplasmic reticulum membrane. Plays a role in the down-regulation of the host NKG2D ligand MICA by targeting ER-resident MICA to proteasomal degradation prior to the GPI-anchoring step. In turn, MICA reduction diminishes NK-cell killing of HCMV-infected cells. This is an uncharacterized protein from Homo sapiens (Human).